The primary structure comprises 280 residues: Urease accessory protein UreD (280 aa).

It belongs to the UreD family. As to quaternary structure, ureD, UreF and UreG form a complex that acts as a GTP-hydrolysis-dependent molecular chaperone, activating the urease apoprotein by helping to assemble the nickel containing metallocenter of UreC. The UreE protein probably delivers the nickel.

Its subcellular location is the cytoplasm. Required for maturation of urease via the functional incorporation of the urease nickel metallocenter. The sequence is that of Urease accessory protein UreD from Staphylococcus saprophyticus subsp. saprophyticus (strain ATCC 15305 / DSM 20229 / NCIMB 8711 / NCTC 7292 / S-41).